The following is a 292-amino-acid chain: N-acetylneuraminate lyase (292 aa).

S47 and T48 together coordinate aceneuramate. Catalysis depends on Y136, which acts as the Proton donor. Catalysis depends on K164, which acts as the Schiff-base intermediate with substrate. T166, G188, D190, E191, and S207 together coordinate aceneuramate.

The protein belongs to the DapA family. NanA subfamily. As to quaternary structure, homotetramer.

It is found in the cytoplasm. The catalysed reaction is aceneuramate = aldehydo-N-acetyl-D-mannosamine + pyruvate. It functions in the pathway amino-sugar metabolism; N-acetylneuraminate degradation; D-fructose 6-phosphate from N-acetylneuraminate: step 1/5. Functionally, catalyzes the reversible aldol cleavage of N-acetylneuraminic acid (sialic acid; Neu5Ac) to form pyruvate and N-acetylmannosamine (ManNAc) via a Schiff base intermediate. The protein is N-acetylneuraminate lyase of Actinobacillus pleuropneumoniae serotype 5b (strain L20).